The primary structure comprises 1368 residues: Beclin-1-like protein A (1368 aa).

2 stretches are compositionally biased toward low complexity: residues 24-57 and 122-135; these read GSGS…NNGP and NSII…SPSN. Disordered regions lie at residues 24–64, 122–249, 331–431, 819–874, and 992–1048; these read GSGS…PSSE, NSII…SLMM, NKNN…STNS, TITP…NNNN, and IDGN…NDNN. The segment covering 136–147 has biased composition (polar residues); sequence AITRNNSFNMDP. Over residues 148–167 the composition is skewed to low complexity; the sequence is NNNNNNNNNNNNNNNNNNNN. Polar residues predominate over residues 168 to 177; that stretch reads GEYMNSSIVF. Low complexity predominate over residues 179–246; the sequence is NNVNNNNNNP…INNSVNSVNS (68 aa). Composition is skewed to low complexity over residues 992–1005 and 1015–1048; these read IDGN…NDNN and NNNN…NDNN. Positions 1047–1150 form a coiled coil; that stretch reads NNYNFENEIN…AIRDQLERVS (104 aa).

It belongs to the beclin family.

It is found in the endosome membrane. In terms of biological role, involved in autophagy. May be required to recruit the atg8-phosphatidylinositol conjugate and the atg12-atg5 conjugate to the pre-autophagosomal structure. Required for normal survival when exposed to pathogenic bacteria S.typhimurium by promoting autophagic degradation of intracellular S.typhimurium. The chain is Beclin-1-like protein A (atg6A) from Dictyostelium discoideum (Social amoeba).